The chain runs to 376 residues: Mitogen-activated protein kinase 5 (376 aa).

Residues 43–329 (VPPIRPIGRG…VEEALCYPYL (287 aa)) form the Protein kinase domain. ATP contacts are provided by residues 49–57 (IGRGAYGFV) and Lys-72. Residue Asp-169 is the Proton acceptor of the active site. Position 201 is a phosphothreonine (Thr-201). A TXY motif is present at residues 201 to 203 (TEY). Tyr-203 carries the post-translational modification Phosphotyrosine. Position 206 is a phosphothreonine (Thr-206).

Belongs to the protein kinase superfamily. CMGC Ser/Thr protein kinase family. MAP kinase subfamily. Autophosphorylated on threonine and tyrosine residues. In terms of processing, dually phosphorylated on Thr-201 and Tyr-203, which activates the enzyme.

The enzyme catalyses L-seryl-[protein] + ATP = O-phospho-L-seryl-[protein] + ADP + H(+). It catalyses the reaction L-threonyl-[protein] + ATP = O-phospho-L-threonyl-[protein] + ADP + H(+). Activated by threonine and tyrosine phosphorylation. Activated by the MAP kinase kinase MKK2. Activated by the MAP kinase kinase MKK6 in vitro. The sequence is that of Mitogen-activated protein kinase 5 (MPK5) from Arabidopsis thaliana (Mouse-ear cress).